The following is a 201-amino-acid chain: 3-isopropylmalate dehydratase small subunit (201 aa).

The protein belongs to the LeuD family. LeuD type 1 subfamily. In terms of assembly, heterodimer of LeuC and LeuD.

The enzyme catalyses (2R,3S)-3-isopropylmalate = (2S)-2-isopropylmalate. It participates in amino-acid biosynthesis; L-leucine biosynthesis; L-leucine from 3-methyl-2-oxobutanoate: step 2/4. In terms of biological role, catalyzes the isomerization between 2-isopropylmalate and 3-isopropylmalate, via the formation of 2-isopropylmaleate. The sequence is that of 3-isopropylmalate dehydratase small subunit from Nitrobacter winogradskyi (strain ATCC 25391 / DSM 10237 / CIP 104748 / NCIMB 11846 / Nb-255).